We begin with the raw amino-acid sequence, 353 residues long: Phospho-N-acetylmuramoyl-pentapeptide-transferase (353 aa).

Helical transmembrane passes span 16-36 (YISV…MYLM), 64-84 (AGTP…ATVL), 88-108 (LNNF…LIGI), 130-150 (LIFQ…YGHS), 160-180 (FPLF…IVGS), 198-218 (SILA…AVFA), 228-248 (IAGE…AFLW), 256-276 (VFMG…LAIV), 281-301 (ILLL…ILQV), and 330-350 (KIIV…LLSL).

This sequence belongs to the glycosyltransferase 4 family. MraY subfamily. The cofactor is Mg(2+).

The protein resides in the cell inner membrane. The enzyme catalyses UDP-N-acetyl-alpha-D-muramoyl-L-alanyl-gamma-D-glutamyl-meso-2,6-diaminopimeloyl-D-alanyl-D-alanine + di-trans,octa-cis-undecaprenyl phosphate = di-trans,octa-cis-undecaprenyl diphospho-N-acetyl-alpha-D-muramoyl-L-alanyl-D-glutamyl-meso-2,6-diaminopimeloyl-D-alanyl-D-alanine + UMP. Its pathway is cell wall biogenesis; peptidoglycan biosynthesis. Catalyzes the initial step of the lipid cycle reactions in the biosynthesis of the cell wall peptidoglycan: transfers peptidoglycan precursor phospho-MurNAc-pentapeptide from UDP-MurNAc-pentapeptide onto the lipid carrier undecaprenyl phosphate, yielding undecaprenyl-pyrophosphoryl-MurNAc-pentapeptide, known as lipid I. This Aliarcobacter butzleri (strain RM4018) (Arcobacter butzleri) protein is Phospho-N-acetylmuramoyl-pentapeptide-transferase.